The sequence spans 245 residues: D-aminoacyl-tRNA deacylase (245 aa).

It belongs to the DtdA deacylase family. In terms of assembly, monomer. Zn(2+) serves as cofactor.

The catalysed reaction is a D-aminoacyl-tRNA + H2O = a tRNA + a D-alpha-amino acid + H(+). It carries out the reaction glycyl-tRNA(Ala) + H2O = tRNA(Ala) + glycine + H(+). D-aminoacyl-tRNA deacylase with broad substrate specificity. By recycling D-aminoacyl-tRNA to D-amino acids and free tRNA molecules, this enzyme counteracts the toxicity associated with the formation of D-aminoacyl-tRNA entities in vivo. The protein is D-aminoacyl-tRNA deacylase of Ignicoccus hospitalis (strain KIN4/I / DSM 18386 / JCM 14125).